Consider the following 192-residue polypeptide: Putative manganese efflux pump MntP (192 aa).

A run of 6 helical transmembrane segments spans residues 2–22 (IAII…AFAV), 41–61 (SALW…YAAS), 62–82 (AFSA…LAFI), 109–129 (MLPL…SLAF), 136–156 (FAIL…LYIG), and 172–192 (GVVL…VIAF).

It belongs to the MntP (TC 9.B.29) family.

Its subcellular location is the cell membrane. Its function is as follows. Probably functions as a manganese efflux pump. This Bifidobacterium longum subsp. infantis (strain ATCC 15697 / DSM 20088 / JCM 1222 / NCTC 11817 / S12) protein is Putative manganese efflux pump MntP.